The sequence spans 473 residues: Cysteine--tRNA ligase (473 aa).

Cysteine 28 contacts Zn(2+). The 'HIGH' region signature appears at 30 to 40 (PTVYNMPHIGN). 3 residues coordinate Zn(2+): cysteine 213, histidine 238, and glutamate 242. The short motif at 270–274 (KMSKS) is the 'KMSKS' region element. Lysine 273 provides a ligand contact to ATP.

The protein belongs to the class-I aminoacyl-tRNA synthetase family. Zn(2+) serves as cofactor.

The protein resides in the cytoplasm. It carries out the reaction tRNA(Cys) + L-cysteine + ATP = L-cysteinyl-tRNA(Cys) + AMP + diphosphate. The protein is Cysteine--tRNA ligase of Methanosarcina acetivorans (strain ATCC 35395 / DSM 2834 / JCM 12185 / C2A).